Reading from the N-terminus, the 232-residue chain is Large ribosomal subunit protein uL1 (232 aa).

The protein belongs to the universal ribosomal protein uL1 family. In terms of assembly, part of the 50S ribosomal subunit.

Binds directly to 23S rRNA. The L1 stalk is quite mobile in the ribosome, and is involved in E site tRNA release. Functionally, protein L1 is also a translational repressor protein, it controls the translation of the L11 operon by binding to its mRNA. The chain is Large ribosomal subunit protein uL1 from Bacillus velezensis (strain DSM 23117 / BGSC 10A6 / LMG 26770 / FZB42) (Bacillus amyloliquefaciens subsp. plantarum).